Consider the following 287-residue polypeptide: ATP phosphoribosyltransferase (287 aa).

This sequence belongs to the ATP phosphoribosyltransferase family. Long subfamily. Mg(2+) is required as a cofactor.

It is found in the cytoplasm. It carries out the reaction 1-(5-phospho-beta-D-ribosyl)-ATP + diphosphate = 5-phospho-alpha-D-ribose 1-diphosphate + ATP. The protein operates within amino-acid biosynthesis; L-histidine biosynthesis; L-histidine from 5-phospho-alpha-D-ribose 1-diphosphate: step 1/9. With respect to regulation, feedback inhibited by histidine. In terms of biological role, catalyzes the condensation of ATP and 5-phosphoribose 1-diphosphate to form N'-(5'-phosphoribosyl)-ATP (PR-ATP). Has a crucial role in the pathway because the rate of histidine biosynthesis seems to be controlled primarily by regulation of HisG enzymatic activity. This chain is ATP phosphoribosyltransferase (hisG), found in Methanothermobacter thermautotrophicus (strain ATCC 29096 / DSM 1053 / JCM 10044 / NBRC 100330 / Delta H) (Methanobacterium thermoautotrophicum).